The following is a 451-amino-acid chain: MLHKNDIIETEISDISHEGMGIAKVDGFVFFVENALPGEIIKMRVLKLRKRIGYGKVEEYLTTSPHRNEGLDYTYLRTGIADLGHLTYEQQLLFKQKQVADNLYKIAHISDVLVEPTLGMTIPLAYRNKAQVPVRRVDGQLETGFFRKNSHTLVSIEDYLIQEKEIDALINFTRDLLRKFDVKPYDEEQQSGLIRNLVVRRGHYTGQLMLVLVTTRPKIFRIDQMIEKLVSAFPSVVSIMQNINDRNSNVIFGKEFRTLYGSDTIEDQMLGNTYAISAQSFYQVNTEMAEKLYQKAIDFSDLNSEDIVIDAYSGIGTIGLSVAKQVKHVYGVEVVEKAVSDAKENATRNGITNSTYVADSAENAMAKWLKEGIKPTVIMVDPPRKGLTESFVYSAAQTKADKITYISCNSATMARDIKLFEELGYHLVKIQPVDLFPMTHHVECVALLVKA.

Residues Met1–Glu59 form the TRAM domain. Residues Gln283, Tyr312, Glu333, and Asp381 each coordinate S-adenosyl-L-methionine. Residue Cys408 is the Nucleophile of the active site.

This sequence belongs to the class I-like SAM-binding methyltransferase superfamily. RNA M5U methyltransferase family.

This is an uncharacterized protein from Streptococcus agalactiae serotype V (strain ATCC BAA-611 / 2603 V/R).